The sequence spans 372 residues: Methylthioribose-1-phosphate isomerase 2 (372 aa).

Catalysis depends on Asp254, which acts as the Proton donor.

It belongs to the eIF-2B alpha/beta/delta subunits family. MtnA subfamily.

It is found in the cytoplasm. It localises to the nucleus. It carries out the reaction 5-(methylsulfanyl)-alpha-D-ribose 1-phosphate = 5-(methylsulfanyl)-D-ribulose 1-phosphate. Its pathway is amino-acid biosynthesis; L-methionine biosynthesis via salvage pathway; L-methionine from S-methyl-5-thio-alpha-D-ribose 1-phosphate: step 1/6. Its function is as follows. Catalyzes the interconversion of methylthioribose-1-phosphate (MTR-1-P) into methylthioribulose-1-phosphate (MTRu-1-P). This Trypanosoma cruzi (strain CL Brener) protein is Methylthioribose-1-phosphate isomerase 2.